We begin with the raw amino-acid sequence, 361 residues long: Outer membrane protein P2 (361 aa).

The N-terminal stretch at 1–20 is a signal peptide; that stretch reads MKKTLAALIVGAFAASAANA.

Belongs to the Gram-negative porin family. Homotrimer.

The protein localises to the cell outer membrane. Functionally, forms pores that allow passive diffusion of small molecules across the outer membrane. The sequence is that of Outer membrane protein P2 (ompP2) from Haemophilus influenzae.